We begin with the raw amino-acid sequence, 266 residues long: Ras-like protein family member 12 (266 aa).

Residues 27–34, 74–78, and 134–137 each bind GTP; these read GRRGAGKS, DTADL, and NKLD.

It belongs to the small GTPase superfamily. Ras family.

It carries out the reaction GTP + H2O = GDP + phosphate + H(+). The chain is Ras-like protein family member 12 (RASL12) from Homo sapiens (Human).